The following is a 1193-amino-acid chain: Tubulin monoglutamylase TTLL4 (1193 aa).

Disordered regions lie at residues 1–37 (MASAGTEHYSIGLRRGNSFKQRHPSGTVSASPSEKPS) and 468–535 (VHLD…CSSL). Residues 24 to 34 (PSGTVSASPSE) show a composition bias toward polar residues. Residues 472-482 (QPGKEPEEAKD) are compositionally biased toward basic and acidic residues. Residues 502-515 (EPEDTEDELGDGLE) are compositionally biased toward acidic residues. The TTL domain maps to 599–942 (RRLLRWKMST…VLPNMEDIIS (344 aa)). Ser686 is modified (phosphoserine). Residues Lys716, 722–723 (RG), 744–747 (QRYL), and 757–759 (KFD) contribute to the ATP site. An a protein-binding site is contributed by Arg722. Arg783 is an L-glutamate binding site. 804 to 805 (TN) contributes to the ATP binding site. 3 residues coordinate L-glutamate: Tyr806, Ser807, and Lys828. Residues Asp888, Glu901, and Asn903 each contribute to the Mg(2+) site. The tract at residues 913 to 1027 (PLDISIKGQM…RGQFERIFPS (115 aa)) is c-MTBD region. Residue Lys919 coordinates L-glutamate. Low complexity predominate over residues 943-960 (SSSSPSSSSGSSTSLPSS). 2 disordered regions span residues 943 to 966 (SSSSPSSSSGSSTSLPSSPRDKCQ) and 1092 to 1193 (MTTS…AVSS). Polar residues-rich tracts occupy residues 1092-1102 (MTTSKGDGTPN) and 1131-1153 (SQAGLSPISRKTLSSRSNENTSK). Over residues 1168–1182 (SGQSSRLSAASASQS) the composition is skewed to low complexity. Over residues 1183–1193 (VTDSRLTAVSS) the composition is skewed to polar residues.

It belongs to the tubulin--tyrosine ligase family. Mg(2+) serves as cofactor. As to expression, highly expressed in testis. Expressed in brain, heart, kidney, liver, lung, muscle and spleen. In the brain, expressed in ependymal cilia, the cortex and the striatum. Expressed in blastomere.

The protein localises to the cytoplasm. It localises to the cell projection. Its subcellular location is the cilium. It is found in the cytoskeleton. The protein resides in the cilium basal body. The catalysed reaction is L-glutamyl-[protein] + L-glutamate + ATP = gamma-L-glutamyl-L-glutamyl-[protein] + ADP + phosphate + H(+). In terms of biological role, monoglutamylase which modifies both tubulin and non-tubulin proteins, adding a single glutamate on the gamma-carboxyl group of specific glutamate residues of target proteins. Involved in the side-chain initiation step of the polyglutamylation reaction but not in the elongation step. Preferentially modifies beta-tail tubulin over the alpha-tubulin. Monoglutamylates nucleosome assembly proteins NAP1L1 and NAP1L4. Monoglutamylates nucleotidyltransferase CGAS, leading to inhibition of CGAS catalytic activity, thereby preventing antiviral defense function. Involved in KLF4 glutamylation which impedes its ubiquitination, thereby leading to somatic cell reprogramming, pluripotency maintenance and embryogenesis. This Mus musculus (Mouse) protein is Tubulin monoglutamylase TTLL4.